A 280-amino-acid polypeptide reads, in one-letter code: MIQFVIPSYQHVGAVSALDMFPTDYEPHIVVREHEEKAYYDAYGSRAKIITIPDDVNGIAGTRKAITDMYAGQRIWMIDDDTTIRMSSMRKRDDRRCVDKVNQLTREQFYELIQYVEDAMDCGYYHGHARLPIFKITSSWGNYRENSYGFTNTWYDLGKLTTEQIGYGKIDLCEDMYAFLNLINQGYPHLALFKYLVVSGKAQAPGGCSSIRSNSKHNRALEQINREFPEQARWKTSNIEKRKSLGEEDESLKVLRMCVSRKEKSEAFHKFNAIHPIAVD.

It functions in the pathway genetic information processing; DNA modification. Its function is as follows. Transfers a gentiobiosyl-group on a hydroxymethylcytosine residue in DNA. Is involved in a DNA modification process to protects the phage genome against its own nucleases and the host restriction endonuclease system. The sequence is that of Beta-glucosyl-HMC-alpha-glucosyl-transferase from Enterobacteria phage T2 (Bacteriophage T2).